We begin with the raw amino-acid sequence, 226 residues long: SURF1-like protein (226 aa).

The next 2 helical transmembrane spans lie at 3–23 and 199–219; these read TNLVVLITFTILISLGFWQLS and LEYALTWFGLAISLIVIYVIY.

It belongs to the SURF1 family.

The protein localises to the cell membrane. This chain is SURF1-like protein, found in Rickettsia felis (strain ATCC VR-1525 / URRWXCal2) (Rickettsia azadi).